The following is a 77-amino-acid chain: UPF0349 protein lwe2340 (77 aa).

Belongs to the UPF0349 family.

The chain is UPF0349 protein lwe2340 from Listeria welshimeri serovar 6b (strain ATCC 35897 / DSM 20650 / CCUG 15529 / CIP 8149 / NCTC 11857 / SLCC 5334 / V8).